The primary structure comprises 530 residues: Probable flavin-containing monooxygenase 1 (530 aa).

FAD contacts are provided by residues 17–21 (GAGVS), Glu38, 46–47 (VW), and 58–59 (QS). An NADP(+)-binding site is contributed by 219–222 (SAID).

Belongs to the FMO family. Requires FAD as cofactor.

Functionally, required for the establishment of systemic acquired resistance (SAR). Not involved in local defense mechanisms. Confers a salicylic acid-dependent (SA) resistance to virulent pathogens such as P.syringae pv tomato and H.parasitica. The polypeptide is Probable flavin-containing monooxygenase 1 (FMO1) (Arabidopsis thaliana (Mouse-ear cress)).